Consider the following 334-residue polypeptide: Ephrin-B1 (334 aa).

The N-terminal stretch at 1-25 (MARPRGGRWLLGVLLALCRLAAPLA) is a signal peptide. One can recognise an Ephrin RBD domain in the interval 26-160 (KSLEPVSWSA…TRSMKIVMKV (135 aa)). Over 26-231 (KSLEPVSWSA…FLSSKVAVFA (206 aa)) the chain is Extracellular. Disulfide bonds link Cys-60–Cys-97 and Cys-85–Cys-149. Asn-135 carries an N-linked (GlcNAc...) asparagine glycan. A disordered region spans residues 175 to 218 (SRPSKEADNTVKIVTQSPRHKVPTVEEPGKPGSVNQNGQETQGP). Positions 207–218 (SVNQNGQETQGP) are enriched in polar residues. A helical transmembrane segment spans residues 232–252 (AIGAGCVIFILIIIFLVVLLI). The Cytoplasmic segment spans residues 253–334 (KIRKRHRKHT…QSPANIYYKV (82 aa)). A PDZ-binding motif is present at residues 332-334 (YKV).

It belongs to the ephrin family. Binds to the receptor tyrosine kinase EPHB2. Interacts with GRIP1 and GRIP2. Post-translationally, inducible phosphorylation of tyrosine residues in the cytoplasmic domain.

The protein localises to the membrane. Functionally, cell surface transmembrane ligand for Eph receptors, a family of receptor tyrosine kinases which are crucial for migration, repulsion and adhesion during neuronal, vascular and epithelial development. Binds promiscuously Eph receptors residing on adjacent cells, leading to contact-dependent bidirectional signaling into neighboring cells. The signaling pathway downstream of the receptor is referred to as forward signaling while the signaling pathway downstream of the ephrin ligand is referred to as reverse signaling. This Gallus gallus (Chicken) protein is Ephrin-B1 (EFNB1).